The sequence spans 480 residues: Aromatic-L-amino-acid decarboxylase (480 aa).

An N-acetylmethionine modification is found at Met-1. 2 consecutive repeat copies span residues 58–115 (GDIE…TELE) and 118–178 (MLDW…TQAA). Positions 58–178 (GDIERIIMPG…AASPELTQAA (121 aa)) are 2 X approximate tandem repeats. Thr-82 provides a ligand contact to substrate. Residues Ala-148 and Ser-149 each coordinate pyridoxal 5'-phosphate. Substrate is bound at residue His-192. The pyridoxal 5'-phosphate site is built by Thr-246 and Asn-300. Lys-303 bears the N6-(pyridoxal phosphate)lysine mark.

This sequence belongs to the group II decarboxylase family. As to quaternary structure, homodimer. Pyridoxal 5'-phosphate serves as cofactor.

It carries out the reaction L-dopa + H(+) = dopamine + CO2. It catalyses the reaction 5-hydroxy-L-tryptophan + H(+) = serotonin + CO2. The protein operates within catecholamine biosynthesis; dopamine biosynthesis; dopamine from L-tyrosine: step 2/2. Its function is as follows. Catalyzes the decarboxylation of L-3,4-dihydroxyphenylalanine (DOPA) to dopamine and L-5-hydroxytryptophan to serotonin. The protein is Aromatic-L-amino-acid decarboxylase (DDC) of Cavia porcellus (Guinea pig).